The primary structure comprises 193 residues: uncharacterized protein (193 aa).

A helical membrane pass occupies residues 153-170 (WRYWAVIALIAAVLIYLY).

It localises to the membrane. This is an uncharacterized protein from Invertebrate iridescent virus 6 (IIV-6).